Reading from the N-terminus, the 143-residue chain is Large ribosomal subunit protein uL11 (143 aa).

Belongs to the universal ribosomal protein uL11 family. In terms of assembly, part of the ribosomal stalk of the 50S ribosomal subunit. Interacts with L10 and the large rRNA to form the base of the stalk. L10 forms an elongated spine to which L12 dimers bind in a sequential fashion forming a multimeric L10(L12)X complex. Post-translationally, one or more lysine residues are methylated.

In terms of biological role, forms part of the ribosomal stalk which helps the ribosome interact with GTP-bound translation factors. The chain is Large ribosomal subunit protein uL11 from Polynucleobacter necessarius subsp. necessarius (strain STIR1).